Reading from the N-terminus, the 447-residue chain is Probable ribosomal RNA small subunit methyltransferase B (447 aa).

Residues 259 to 265 (CAAPGGK), D283, D310, and D329 each bind S-adenosyl-L-methionine. The active-site Nucleophile is C382.

The protein belongs to the class I-like SAM-binding methyltransferase superfamily. RsmB/NOP family.

The protein localises to the cytoplasm. The catalysed reaction is cytidine(967) in 16S rRNA + S-adenosyl-L-methionine = 5-methylcytidine(967) in 16S rRNA + S-adenosyl-L-homocysteine + H(+). Specifically methylates the cytosine at position 967 (m5C967) of 16S rRNA. This Bacillus subtilis (strain 168) protein is Probable ribosomal RNA small subunit methyltransferase B.